A 653-amino-acid polypeptide reads, in one-letter code: MKSPPLLSPCLSWKRMAGIFFLPFISSGFAPRFKQEENFMLGRAHPSQPRFNWSHLTPLELKNRSVGLGTESTGRGKPHFTLEGHKFLIFGGSIHYFRVPREYWRDRLLKLKACGFNTVTTYVPWNLHEPERGKFDFSGNLDLEAFVLMAAEIGLWVILRPGRYICSEMDLGGLPSWLLQDPRLLLRTTNKSFIEAVEKYFDHLIPRVIPLQYRQAGPVIAVQVENEYGSFNKDKTYMPYLHKALLRRGIVELLLTSDGEKHVLSGHTKGVLAAINLQKLHQDTFNQLHKVQRDKPLLIMEYWVGWFDRWGDKHHVKDAKEVEHAVSEFIKYEISFNVYMFHGGTNFGFMNGATYFGKHSGIVTSYDYDAVLTEAGDYTEKYLKLQKLFQSVSATPLPRVPKLPPKAVYPPVRPSLYLPLWDALSYLNEPVRSRQPVNMENLPINNGSGQSYGLVLYEKSICSGGRLRAHAHDVAQVFLDETMIGILNENNKDLHIPELRDCRYLRILVENQGRVNFSWQIQNEQKGITGSVSINNSSLEGFTIYSLEMKMSFFERLRSATWKPVPDSHQGPAFYCGTLKAGPSPKDTFLSLLNWNYGFVFINGRNLGRYWNIGPQKTLYLPGVWLHPEDNEVILFEKMMSGSDIKSTDKPTL.

The active-site Proton donor is Glu227. The Nucleophile role is filled by Glu301.

The protein belongs to the glycosyl hydrolase 35 family.

In Homo sapiens (Human), this protein is Beta-galactosidase-1-like protein 3 (GLB1L3).